The following is a 521-amino-acid chain: GMP synthase [glutamine-hydrolyzing] (521 aa).

In terms of domain architecture, Glutamine amidotransferase type-1 spans 5 to 203; it reads KILILDFGSQ…VHEICGCGND (199 aa). The active-site Nucleophile is Cys82. Active-site residues include His177 and Glu179. The GMPS ATP-PPase domain maps to 204–396; the sequence is WNMPDYISEA…LGLPHDMVYR (193 aa). 231–237 contributes to the ATP binding site; that stretch reads SGGVDSS.

Homodimer.

It carries out the reaction XMP + L-glutamine + ATP + H2O = GMP + L-glutamate + AMP + diphosphate + 2 H(+). Its pathway is purine metabolism; GMP biosynthesis; GMP from XMP (L-Gln route): step 1/1. Functionally, catalyzes the synthesis of GMP from XMP. This is GMP synthase [glutamine-hydrolyzing] from Azoarcus sp. (strain BH72).